We begin with the raw amino-acid sequence, 344 residues long: N-acetyl-gamma-glutamyl-phosphate reductase (344 aa).

Cysteine 150 is a catalytic residue.

Belongs to the NAGSA dehydrogenase family. Type 1 subfamily.

It is found in the cytoplasm. It catalyses the reaction N-acetyl-L-glutamate 5-semialdehyde + phosphate + NADP(+) = N-acetyl-L-glutamyl 5-phosphate + NADPH + H(+). It functions in the pathway amino-acid biosynthesis; L-arginine biosynthesis; N(2)-acetyl-L-ornithine from L-glutamate: step 3/4. Catalyzes the NADPH-dependent reduction of N-acetyl-5-glutamyl phosphate to yield N-acetyl-L-glutamate 5-semialdehyde. The protein is N-acetyl-gamma-glutamyl-phosphate reductase of Pseudomonas entomophila (strain L48).